The primary structure comprises 1004 residues: Glutamate [NMDA] receptor subunit 1 (1004 aa).

The N-terminal stretch at 1-39 (MAGTDSPAAARFVYRCLLFAPAIVVGLLLPLTLPPIAAA) is a signal peptide. Residues 40 to 585 (QRHTASDNPS…TLVSFLQPFS (546 aa)) lie on the Extracellular side of the membrane. N-linked (GlcNAc...) asparagine glycosylation is found at asparagine 270, asparagine 326, asparagine 357, asparagine 409, asparagine 466, asparagine 493, and asparagine 513. Residues 542-544 (PLT) and arginine 549 each bind glycine. A helical membrane pass occupies residues 586–606 (NTLWILVMVSVHVVALVLYLL). Residues 607 to 663 (DRFSPFGRFKLSHSDSNEEKALNLSSAVWFAWGVLLNSGIGEGTPRSFSARVLGMVW) are Cytoplasmic-facing. A helical membrane pass occupies residues 664-684 (AGFAMIIVASYTANLAAFLVL). At 685-843 (ERPKTKLSGI…KTPNTLGLKN (159 aa)) the chain is on the extracellular side. Asparagine 705 carries an N-linked (GlcNAc...) asparagine glycan. Residues serine 715 and aspartate 759 each contribute to the glycine site. Residues 844–864 (MAGVFILVGVGIAGGVGLIII) traverse the membrane as a helical segment. The Cytoplasmic segment spans residues 865–1004 (EVIYKKHQVK…YTSDVSHLVV (140 aa)). The disordered stretch occupies residues 980 to 1004 (TRPQQNILPPRYSPGYTSDVSHLVV). Positions 994 to 1004 (GYTSDVSHLVV) are enriched in polar residues.

This sequence belongs to the glutamate-gated ion channel (TC 1.A.10.1) family. Forms a heteromeric NMDA channel with Nmdar2.

The protein localises to the cell membrane. The protein resides in the postsynaptic cell membrane. It is found in the postsynaptic density. NMDA receptor subtype of glutamate-gated ion channels with high calcium permeability and voltage-dependent sensitivity to magnesium. Mediated by glycine. This protein plays a key role in synaptic plasticity, synaptogenesis, excitotoxicity, memory acquisition and learning. It mediates neuronal functions in glutamate neurotransmission. Is involved in the cell surface targeting of NMDA receptors. Plays a role in associative learning and in long-term memory consolidation. The chain is Glutamate [NMDA] receptor subunit 1 from Drosophila persimilis (Fruit fly).